The primary structure comprises 572 residues: Fatty acid amide hydrolase 1 (572 aa).

The N-terminal stretch at 1-14 (MIFYLVLLVLGAIA) is a signal peptide. Residues 32-63 (IVAQRRRDDLSKNVEQARKAADKLDTQRRDWI) adopt a coiled-coil conformation. Catalysis depends on charge relay system residues Lys139 and Ser214. Residues Ser214 and 235–238 (VGGS) contribute to the substrate site. Ser238 functions as the Acyl-ester intermediate in the catalytic mechanism.

The protein belongs to the amidase family. As to expression, expressed in the pharynx, some pharyngeal neurons, the posterior intestine and anal depressor muscles.

The enzyme catalyses N-(5Z,8Z,11Z,14Z-eicosatetraenoyl)-ethanolamine + H2O = ethanolamine + (5Z,8Z,11Z,14Z)-eicosatetraenoate. It carries out the reaction (9Z)-octadecenamide + H2O = (9Z)-octadecenoate + NH4(+). It catalyses the reaction (5Z,8Z,11Z,14Z,17Z-eicosapentaenoyl) ethanolamine + H2O = (5Z,8Z,11Z,14Z,17Z)-eicosapentaenoate + ethanolamine. The catalysed reaction is N-(9Z-hexadecenoyl) ethanolamine + H2O = (9Z)-hexadecenoate + ethanolamine. The enzyme catalyses N-(9Z-octadecenoyl) ethanolamine + H2O = ethanolamine + (9Z)-octadecenoate. It carries out the reaction N-octadecanoyl ethanolamine + H2O = octadecanoate + ethanolamine. It catalyses the reaction N-docosanoyl-ethanolamine + H2O = docosanoate + ethanolamine. The catalysed reaction is N-(15Z-tetracosenoyl)-ethanolamine + H2O = (15Z)-tetracosenoate + ethanolamine. The enzyme catalyses N-hexadecanoylethanolamine + H2O = ethanolamine + hexadecanoate. It carries out the reaction N-(9Z,12Z-octadecadienoyl)-ethanolamine + H2O = ethanolamine + (9Z,12Z)-octadecadienoate. It catalyses the reaction (9Z)-octadecenoate + glycine = N-(9Z-octadecenoyl)glycine + H2O. The catalysed reaction is N-(5Z,8Z,11Z,14Z)-eicosatetraenoyl-glycine + H2O = (5Z,8Z,11Z,14Z)-eicosatetraenoate + glycine. The enzyme catalyses N-(5Z,8Z,11Z,14Z-eicosatetraenoyl)-L-serine + H2O = (5Z,8Z,11Z,14Z)-eicosatetraenoate + L-serine. Functionally, catalyzes the hydrolysis of endogenous amidated lipids like anandamide (AEA or N-(5Z,8Z,11Z,14Z-eicosatetraenoyl)-ethanolamine) and eicosapentaneoyl ethanolamide (EPEA or (5Z,8Z,11Z,14Z,17Z-eicosapentaenoyl) ethanolamine), as well as other fatty amides, to their corresponding fatty acids, thereby regulating the signaling functions of these molecules. EPEA promotes dauer formation and may constitute a signal of high nutrient availability. Breakdown of EPEA may promote lifespan extension when nutrient availability is high. Facilitates axon regeneration after injury by degradating inhibitory compounds such as AEA. FAAH cooperates with PM20D1 in the hydrolysis of amino acid-conjugated fatty acids such as N-fatty acyl glycine and N-fatty acyl-L-serine, thereby acting as a physiological regulator of specific subsets of intracellular, but not of extracellular, N-fatty acyl amino acids. The chain is Fatty acid amide hydrolase 1 from Caenorhabditis elegans.